Reading from the N-terminus, the 337-residue chain is Glycerol-3-phosphate dehydrogenase [NAD(P)+] (337 aa).

NADPH contacts are provided by Ser-11, Trp-12, Arg-32, and Lys-109. Lys-109, Gly-140, and Ser-142 together coordinate sn-glycerol 3-phosphate. Ala-144 serves as a coordination point for NADPH. Residues Lys-195, Asp-248, Ser-258, Arg-259, and Asn-260 each coordinate sn-glycerol 3-phosphate. Lys-195 (proton acceptor) is an active-site residue. Arg-259 provides a ligand contact to NADPH. Residues Val-283 and Glu-285 each coordinate NADPH.

The protein belongs to the NAD-dependent glycerol-3-phosphate dehydrogenase family.

Its subcellular location is the cytoplasm. It catalyses the reaction sn-glycerol 3-phosphate + NAD(+) = dihydroxyacetone phosphate + NADH + H(+). It carries out the reaction sn-glycerol 3-phosphate + NADP(+) = dihydroxyacetone phosphate + NADPH + H(+). It participates in membrane lipid metabolism; glycerophospholipid metabolism. Its function is as follows. Catalyzes the reduction of the glycolytic intermediate dihydroxyacetone phosphate (DHAP) to sn-glycerol 3-phosphate (G3P), the key precursor for phospholipid synthesis. The sequence is that of Glycerol-3-phosphate dehydrogenase [NAD(P)+] from Limosilactobacillus fermentum (strain NBRC 3956 / LMG 18251) (Lactobacillus fermentum).